The chain runs to 224 residues: Oxalate oxidase GF-3.8 (224 aa).

An N-terminal signal peptide occupies residues 1–23 (MGYSKNIASGMFAMLLLASAVLS). Cys33 and Cys49 are joined by a disulfide. The Cupin type-1 domain occupies 63–214 (SKLAKAGNTS…ALRVEAGVVE (152 aa)). N-linked (GlcNAc...) asparagine glycans are attached at residues Asn70 and Asn75. The Mn(2+) site is built by His111, His113, Glu118, and His160.

It belongs to the germin family. Oligomer (believed to be a pentamer but probably hexamer).

The protein resides in the secreted. It is found in the extracellular space. The protein localises to the apoplast. Its subcellular location is the cytoplasm. It localises to the cell wall. The catalysed reaction is oxalate + O2 + 2 H(+) = H2O2 + 2 CO2. Its function is as follows. Produces developmental and stress-related release of hydrogen peroxide in the apoplast. May play an important role in several aspects of plant growth and defense mechanisms. The protein is Oxalate oxidase GF-3.8 of Triticum aestivum (Wheat).